A 183-amino-acid polypeptide reads, in one-letter code: Protein GrpE (183 aa).

Over residues 1-14 (MSNEENKINEEALK) the composition is skewed to basic and acidic residues. The segment at 1 to 20 (MSNEENKINEEALKQQDAAE) is disordered.

Belongs to the GrpE family. In terms of assembly, homodimer.

The protein localises to the cytoplasm. In terms of biological role, participates actively in the response to hyperosmotic and heat shock by preventing the aggregation of stress-denatured proteins, in association with DnaK and GrpE. It is the nucleotide exchange factor for DnaK and may function as a thermosensor. Unfolded proteins bind initially to DnaJ; upon interaction with the DnaJ-bound protein, DnaK hydrolyzes its bound ATP, resulting in the formation of a stable complex. GrpE releases ADP from DnaK; ATP binding to DnaK triggers the release of the substrate protein, thus completing the reaction cycle. Several rounds of ATP-dependent interactions between DnaJ, DnaK and GrpE are required for fully efficient folding. This Vibrio vulnificus (strain CMCP6) protein is Protein GrpE.